A 734-amino-acid polypeptide reads, in one-letter code: Photosystem I P700 chlorophyll a apoprotein A2 (734 aa).

8 helical membrane passes run Ile-46–Ala-69, Leu-135–Gln-158, Leu-175–Ile-199, Ile-273–Tyr-291, Leu-330–Tyr-353, Ala-369–Ile-395, Ala-417–His-439, and Phe-517–Val-535. [4Fe-4S] cluster-binding residues include Cys-559 and Cys-568. 2 helical membrane passes run Ala-575 to Trp-596 and Leu-643 to Ile-665. Chlorophyll a-binding residues include His-654, Met-662, and Tyr-670. Trp-671 is a phylloquinone binding site. A helical membrane pass occupies residues Leu-707 to Ala-727.

This sequence belongs to the PsaA/PsaB family. As to quaternary structure, the PsaA/B heterodimer binds the P700 chlorophyll special pair and subsequent electron acceptors. PSI consists of a core antenna complex that captures photons, and an electron transfer chain that converts photonic excitation into a charge separation. The eukaryotic PSI reaction center is composed of at least 11 subunits. P700 is a chlorophyll a/chlorophyll a' dimer, A0 is one or more chlorophyll a, A1 is one or both phylloquinones and FX is a shared 4Fe-4S iron-sulfur center. is required as a cofactor.

It localises to the plastid. The protein localises to the chloroplast thylakoid membrane. The enzyme catalyses reduced [plastocyanin] + hnu + oxidized [2Fe-2S]-[ferredoxin] = oxidized [plastocyanin] + reduced [2Fe-2S]-[ferredoxin]. PsaA and PsaB bind P700, the primary electron donor of photosystem I (PSI), as well as the electron acceptors A0, A1 and FX. PSI is a plastocyanin-ferredoxin oxidoreductase, converting photonic excitation into a charge separation, which transfers an electron from the donor P700 chlorophyll pair to the spectroscopically characterized acceptors A0, A1, FX, FA and FB in turn. Oxidized P700 is reduced on the lumenal side of the thylakoid membrane by plastocyanin. The sequence is that of Photosystem I P700 chlorophyll a apoprotein A2 from Solanum bulbocastanum (Wild potato).